Reading from the N-terminus, the 176-residue chain is Nucleoside triphosphate/diphosphate phosphatase (176 aa).

Arginine 23 serves as the catalytic Proton donor. Residues asparagine 87, aspartate 103, aspartate 105, aspartate 107, aspartate 120, and glutamate 123 each contribute to the Mg(2+) site.

The protein belongs to the Ntdp family. Requires Mg(2+) as cofactor.

The enzyme catalyses a ribonucleoside 5'-triphosphate + H2O = a ribonucleoside 5'-diphosphate + phosphate + H(+). It carries out the reaction a ribonucleoside 5'-diphosphate + H2O = a ribonucleoside 5'-phosphate + phosphate + H(+). Its function is as follows. Has nucleoside phosphatase activity towards nucleoside triphosphates and nucleoside diphosphates. This Lactococcus lactis subsp. lactis (strain IL1403) (Streptococcus lactis) protein is Nucleoside triphosphate/diphosphate phosphatase (yjjG).